The chain runs to 139 residues: Transcription antitermination protein NusB (139 aa).

The protein belongs to the NusB family.

In terms of biological role, involved in transcription antitermination. Required for transcription of ribosomal RNA (rRNA) genes. Binds specifically to the boxA antiterminator sequence of the ribosomal RNA (rrn) operons. This chain is Transcription antitermination protein NusB, found in Enterobacter sp. (strain 638).